Here is a 642-residue protein sequence, read N- to C-terminus: Triacylglycerol lipase 3 (642 aa).

The 189-residue stretch at 204-392 (LILQGGSLFG…NEIEPFLNIN (189 aa)) folds into the PNPLA domain. The GXSXG motif lies at 235-239 (GSSMG). The Nucleophile role is filled by Ser-237. The short motif at 298–303 (HGYSQD) is the HXXXXD acyltransferase motif element. Residue Glu-403 is the Proton acceptor of the active site. The span at 471-481 (RKTQRSSSQSP) shows a compositional bias: polar residues. The disordered stretch occupies residues 471–502 (RKTQRSSSQSPIKAGTVEDLEPEPLMSPVPPS).

It localises to the lipid droplet. It catalyses the reaction a triacylglycerol + H2O = a diacylglycerol + a fatty acid + H(+). The catalysed reaction is 1,2,3-tri-(9Z-octadecenoyl)-glycerol + H2O = di-(9Z)-octadecenoylglycerol + (9Z)-octadecenoate + H(+). It carries out the reaction di-(9Z)-octadecenoylglycerol + H2O = (9Z-octadecenoyl)-glycerol + (9Z)-octadecenoate + H(+). The enzyme catalyses a 1-acyl-sn-glycero-3-phosphoethanolamine + (9Z)-octadecenoyl-CoA = 1-acyl-2-(9Z)-octadecenoyl-sn-glycero-3-phosphoethanolamine + CoA. It catalyses the reaction a 1-acyl-sn-glycero-3-phosphoethanolamine + hexadecanoyl-CoA = 1-acyl-2-hexadecanoyl-sn-glycero-3-phosphoethanolamine + CoA. With respect to regulation, loses its lipolytic activity in cells lacking nonpolar lipids. Lipid particle-localized triacylglycerol (TAG) lipase. The lipid droplet/particle is a lipid storage compartment which serves as a depot of energy and building blocks for membrane lipid biosynthesis. Involved in the mobilization of the non-polar storage lipids triacylglycerols (TAGs) from lipid particles by hydrolysis of TAGs, releasing and supplying specific fatty acids to the appropriate metabolic pathways. Also catalyzes the acylation of lysophosphatidic acid (LPA). Important for efficient sporulation, but rather through its acyltransferase than lipase activity. This is Triacylglycerol lipase 3 (TGL3) from Saccharomyces cerevisiae (strain ATCC 204508 / S288c) (Baker's yeast).